We begin with the raw amino-acid sequence, 74 residues long: uncharacterized protein (74 aa).

The protein to U.parvum UU416.

This is an uncharacterized protein from Mycoplasma pneumoniae (strain ATCC 29342 / M129 / Subtype 1) (Mycoplasmoides pneumoniae).